The sequence spans 119 residues: Large ribosomal subunit protein uL22 (119 aa).

Belongs to the universal ribosomal protein uL22 family. As to quaternary structure, part of the 50S ribosomal subunit.

Functionally, this protein binds specifically to 23S rRNA; its binding is stimulated by other ribosomal proteins, e.g. L4, L17, and L20. It is important during the early stages of 50S assembly. It makes multiple contacts with different domains of the 23S rRNA in the assembled 50S subunit and ribosome. In terms of biological role, the globular domain of the protein is located near the polypeptide exit tunnel on the outside of the subunit, while an extended beta-hairpin is found that lines the wall of the exit tunnel in the center of the 70S ribosome. In Tropheryma whipplei (strain TW08/27) (Whipple's bacillus), this protein is Large ribosomal subunit protein uL22.